Reading from the N-terminus, the 613-residue chain is Dihydroxy-acid dehydratase (613 aa).

Asp81 provides a ligand contact to Mg(2+). Cys122 serves as a coordination point for [2Fe-2S] cluster. Mg(2+) contacts are provided by Asp123 and Lys124. Lys124 carries the post-translational modification N6-carboxylysine. Residue Cys195 coordinates [2Fe-2S] cluster. Glu491 contributes to the Mg(2+) binding site. The active-site Proton acceptor is the Ser517.

This sequence belongs to the IlvD/Edd family. Homodimer. Requires [2Fe-2S] cluster as cofactor. The cofactor is Mg(2+).

The catalysed reaction is (2R)-2,3-dihydroxy-3-methylbutanoate = 3-methyl-2-oxobutanoate + H2O. The enzyme catalyses (2R,3R)-2,3-dihydroxy-3-methylpentanoate = (S)-3-methyl-2-oxopentanoate + H2O. It participates in amino-acid biosynthesis; L-isoleucine biosynthesis; L-isoleucine from 2-oxobutanoate: step 3/4. Its pathway is amino-acid biosynthesis; L-valine biosynthesis; L-valine from pyruvate: step 3/4. Functionally, functions in the biosynthesis of branched-chain amino acids. Catalyzes the dehydration of (2R,3R)-2,3-dihydroxy-3-methylpentanoate (2,3-dihydroxy-3-methylvalerate) into 2-oxo-3-methylpentanoate (2-oxo-3-methylvalerate) and of (2R)-2,3-dihydroxy-3-methylbutanoate (2,3-dihydroxyisovalerate) into 2-oxo-3-methylbutanoate (2-oxoisovalerate), the penultimate precursor to L-isoleucine and L-valine, respectively. This Aeromonas hydrophila subsp. hydrophila (strain ATCC 7966 / DSM 30187 / BCRC 13018 / CCUG 14551 / JCM 1027 / KCTC 2358 / NCIMB 9240 / NCTC 8049) protein is Dihydroxy-acid dehydratase.